Consider the following 61-residue polypeptide: Short neurotoxin 2 (61 aa).

Disulfide bonds link Cys3–Cys23, Cys17–Cys40, Cys42–Cys53, and Cys54–Cys59.

This sequence belongs to the three-finger toxin family. Short-chain subfamily. Type I alpha-neurotoxin sub-subfamily. In terms of tissue distribution, expressed by the venom gland.

The protein resides in the secreted. Functionally, binds to muscle nicotinic acetylcholine receptor (nAChR) and inhibit acetylcholine from binding to the receptor, thereby impairing neuromuscular transmission. The protein is Short neurotoxin 2 of Hemachatus haemachatus (Rinkhals).